A 348-amino-acid chain; its full sequence is Doublesex- and mab-3-related transcription factor dmd-10 (348 aa).

DNA-binding regions (DM) lie at residues Cys-43–Phe-91 and Cys-119–Arg-166. The interval Ser-316–Val-348 is disordered.

It belongs to the DMRT family. As to expression, dimorphically expressed in the dimorphically connected interneuron AVG; expression is observed in the AVG in males, but not in hermaphrodites.

Its subcellular location is the nucleus. Its function is as follows. Transcription factor. Plays a role in neuronal signaling in polymodal sensory neuron ASH, downstream of sensory receptor activation. Required for maintenance of AVG synapses. This is Doublesex- and mab-3-related transcription factor dmd-10 from Caenorhabditis elegans.